The following is a 444-amino-acid chain: Phosphoglucosamine mutase (444 aa).

The active-site Phosphoserine intermediate is Ser103. Mg(2+) contacts are provided by Ser103, Asp242, Asp244, and Asp246. A Phosphoserine modification is found at Ser103.

This sequence belongs to the phosphohexose mutase family. The cofactor is Mg(2+). Activated by phosphorylation.

It carries out the reaction alpha-D-glucosamine 1-phosphate = D-glucosamine 6-phosphate. Catalyzes the conversion of glucosamine-6-phosphate to glucosamine-1-phosphate. The polypeptide is Phosphoglucosamine mutase (Hydrogenovibrio crunogenus (strain DSM 25203 / XCL-2) (Thiomicrospira crunogena)).